Here is a 747-residue protein sequence, read N- to C-terminus: Histone-lysine N-methyltransferase EZH1 (747 aa).

A disordered region spans residues 188–231 (DEEEEGHNDTSDGKQDDSKEDLPVTRKRKRHAIEGNKKSSKKQF). Positions 194 to 211 (HNDTSDGKQDDSKEDLPV) are enriched in basic and acidic residues. Residue K327 forms a Glycyl lysine isopeptide (Lys-Gly) (interchain with G-Cter in SUMO2) linkage. The disordered stretch occupies residues 378–421 (SAVAETKEGDSDRDTGNDWASSSSEANSRCQTPTKQKASPAPPQ). Over residues 382 to 393 (ETKEGDSDRDTG) the composition is skewed to basic and acidic residues. Over residues 395-414 (DWASSSSEANSRCQTPTKQK) the composition is skewed to polar residues. A Nuclear localization signal motif is present at residues 491–496 (QKKKRK). The 103-residue stretch at 504 to 606 (CRKIQLKKDN…CKVVSCKNCS (103 aa)) folds into the CXC domain. Residues 613 to 728 (KHLLLAPSDV…AGEELFLDYR (116 aa)) enclose the SET domain.

Belongs to the class V-like SAM-binding methyltransferase superfamily. Histone-lysine methyltransferase family. EZ subfamily. In terms of assembly, component of the PRC2/EED-EZH1 complex, which includes EED, EZH1, SUZ12, RBBP4 and AEBP2. The PRC2/EED-EZH1 is less abundant than the PRC2/EED-EZH2 complex, has weak methyltransferase activity and compacts chromatin in the absence of the methyltransferase cofactor S-adenosyl-L-methionine (SAM). Interacts with EZHIP; the interaction blocks EZH1 methyltransferase activity.

The protein resides in the nucleus. The catalysed reaction is L-lysyl(27)-[histone H3] + 3 S-adenosyl-L-methionine = N(6),N(6),N(6)-trimethyl-L-lysyl(27)-[histone H3] + 3 S-adenosyl-L-homocysteine + 3 H(+). In terms of biological role, polycomb group (PcG) protein. Catalytic subunit of the PRC2/EED-EZH1 complex, which methylates 'Lys-27' of histone H3, leading to transcriptional repression of the affected target gene. Able to mono-, di- and trimethylate 'Lys-27' of histone H3 to form H3K27me1, H3K27me2 and H3K27me3, respectively. Required for embryonic stem cell derivation and self-renewal, suggesting that it is involved in safeguarding embryonic stem cell identity. Compared to EZH2-containing complexes, it is less abundant in embryonic stem cells, has weak methyltransferase activity and plays a less critical role in forming H3K27me3, which is required for embryonic stem cell identity and proper differentiation. The sequence is that of Histone-lysine N-methyltransferase EZH1 (EZH1) from Pongo abelii (Sumatran orangutan).